Reading from the N-terminus, the 492-residue chain is Catalase isozyme 1 (492 aa).

Active-site residues include histidine 65 and asparagine 138. Tyrosine 348 lines the heme pocket.

The protein belongs to the catalase family. As to quaternary structure, homotetramer. It depends on heme as a cofactor.

It is found in the cytoplasm. The protein resides in the cytosol. The protein localises to the peroxisome matrix. The catalysed reaction is 2 H2O2 = O2 + 2 H2O. With respect to regulation, inhibited by salicylic acid. Its function is as follows. Catalyzes the degradation of hydrogen peroxide (H(2)O(2)) generated by peroxisomal oxidases to water and oxygen, thereby protecting cells from the toxic effects of hydrogen peroxide. The sequence is that of Catalase isozyme 1 (CAT-1) from Nicotiana tabacum (Common tobacco).